A 416-amino-acid polypeptide reads, in one-letter code: Hepatic and glial cell adhesion molecule (416 aa).

An N-terminal signal peptide occupies residues 1 to 33; it reads MKRERGALSRASRALRLAPFVYLLLIQTDPLEG. The Ig-like V-type domain occupies 34-142; sequence VNITSPVRLI…GEKTINLTVD (109 aa). The Extracellular segment spans residues 34–240; it reads VNITSPVRLI…VKITVYRRSS (207 aa). 4 N-linked (GlcNAc...) asparagine glycosylation sites follow: asparagine 35, asparagine 138, asparagine 167, and asparagine 189. An Ig-like C2-type domain is found at 148-234; the sequence is PQVLVASTTV…QGRSLPVKIT (87 aa). The cysteines at positions 168 and 217 are disulfide-linked. The helical transmembrane segment at 241 to 261 threads the bilayer; sequence LYIILSTGGIFLLVTLVTVCA. The Cytoplasmic segment spans residues 262 to 416; it reads CWKPSKRKQK…DEAGPVEISA (155 aa). Residues 273–416 are disordered; it reads LEKQNSLEYM…DEAGPVEISA (144 aa). A Phosphoserine modification is found at serine 278. Over residues 285 to 306 the composition is skewed to basic and acidic residues; it reads NDDRLKPEADTLPRSGEQERKN. Residues serine 350 and serine 377 each carry the phosphoserine modification. Over residues 383–398 the composition is skewed to low complexity; that stretch reads SSPGRSRSASRTLRTA.

Homodimer. Dimer formation occurs predominantly through cis interactions on the cell surface. Part of a complex containing MLC1, TRPV4, AQP4 and ATP1B1. Interacts with CLCN2. N-glycosylated.

The protein resides in the cytoplasm. Its subcellular location is the cell membrane. Its function is as follows. Involved in regulating cell motility and cell-matrix interactions. May inhibit cell growth through suppression of cell proliferation. In glia, associates and targets CLCN2 at astrocytic processes and myelinated fiber tracts where it may regulate transcellular chloride flux involved in neuron excitability. The sequence is that of Hepatic and glial cell adhesion molecule from Homo sapiens (Human).